The sequence spans 235 residues: MSKQLIYSGKAKDIYTTEDENLIISTYKDQATAFNGVKKEQIAGKGVLNNQISSFIFEKLNAAGVATHFVEKLSDTEQLNKKVKIIPLEVVLRNYTAGSFSKRFGVDEGIALETPIVEFYYKNDDLDDPFINDEHVKFLQIADDQQIAYLKEETRRINELLKVWFAEIGLKLIDFKLEFGFDKDGKIILADEFSPDNCRLWDADGNHMDKDVFRRGLGELTDVYEIVWEKLQELK.

This sequence belongs to the SAICAR synthetase family.

It carries out the reaction 5-amino-1-(5-phospho-D-ribosyl)imidazole-4-carboxylate + L-aspartate + ATP = (2S)-2-[5-amino-1-(5-phospho-beta-D-ribosyl)imidazole-4-carboxamido]succinate + ADP + phosphate + 2 H(+). It participates in purine metabolism; IMP biosynthesis via de novo pathway; 5-amino-1-(5-phospho-D-ribosyl)imidazole-4-carboxamide from 5-amino-1-(5-phospho-D-ribosyl)imidazole-4-carboxylate: step 1/2. In Streptococcus pneumoniae (strain JJA), this protein is Phosphoribosylaminoimidazole-succinocarboxamide synthase.